The chain runs to 106 residues: Ig kappa chain C region, B allele (106 aa).

Residues 5–102 enclose the Ig-like domain; that stretch reads PTVSIFPPST…SSSPVVKSFN (98 aa). A disulfide bridge connects residues Cys26 and Cys86.

In Rattus norvegicus (Rat), this protein is Ig kappa chain C region, B allele.